A 209-amino-acid chain; its full sequence is Protein TIFY 11c (209 aa).

Positions 93 to 128 (EITEKAQLTIFYGGSVVVFDDFPAEKAGELMKLAGS) constitute a Tify domain. The Jas motif lies at 153–177 (PIARKVSLQRFLEKRKNRIVVAEPL). Residues 155 to 162 (ARKVSLQR) carry the Nuclear localization signal motif. The tract at residues 175-209 (EPLPESEKKEAESSKRAKKDDGGASWLQVNPTLSL) is disordered. Over residues 179 to 196 (ESEKKEAESSKRAKKDDG) the composition is skewed to basic and acidic residues.

Belongs to the TIFY/JAZ family. Post-translationally, ubiquitinated. Targeted for degradation by the SCF(COI1) E3 ubiquitin ligase-proteasome pathway during jasmonate signaling.

The protein resides in the nucleus. Its function is as follows. Repressor of jasmonate responses. The protein is Protein TIFY 11c of Oryza sativa subsp. indica (Rice).